A 65-amino-acid polypeptide reads, in one-letter code: MVKIKIWSTNVKVLDDFVGKITDIVKKTGVRMDGPIPLPTKRMKIRTMKLPHGEGKKKYEKWEMR.

It belongs to the universal ribosomal protein uS10 family. Part of the 30S ribosomal subunit.

Involved in the binding of tRNA to the ribosomes. The protein is Small ribosomal subunit protein uS10 (rps10) of Desulfurococcus mucosus (Desulfurococcus mobilis).